The following is a 296-amino-acid chain: uncharacterized protein (296 aa).

It localises to the mitochondrion. This is an uncharacterized protein from Podospora anserina (strain S / ATCC MYA-4624 / DSM 980 / FGSC 10383) (Pleurage anserina).